A 478-amino-acid polypeptide reads, in one-letter code: MAGEIQDPFSLSFQGNSIHSGSISFGRFEKEGLSWEKRSSFSHNRYLEEVDKCSKPGSVTEMKAHFEAHFKKKGIRFPASLESQTWGVHQTSNEPDDEAVHATESFEDYRSDGSFSEDTSQSNSVCNYSHEQEKCGQGKSQCEFDEESDHCVSYDEILVNSDEVIELDEEEGGGDHGRVADLVECENLGPPEMPQEIVIQDSALVEEAGSKLDEHASKKPSNSMETPSSSVNVKPIIPNDVRVTKASTKGHDVTPKAASRRTKGSSLSSNSKTNVDAKSQKELRPKKTIESQPKSSNKTETRPPIATNRCKTSTTSSKLEMSTGSTSFRFKCSERAEKRKEFYMKLEEKIHAKKTETNQVQAKTQQKAEAEIKQFRKSLNFKATPMPSFYNIGTRPVSHNKTEPSKVAQSRSRPATSASITNRAVTRVSYKHGFEEAEMVKVMVSNRKQSAAKDSDLQKGNLMAVEMKQQIGARRSRN.

2 disordered regions span residues D201–T326 and P385–I420. A compositionally biased stretch (basic and acidic residues) spans A208–S217. Polar residues-rich tracts occupy residues K219–N232 and G264–A277. The span at K278–I289 shows a compositional bias: basic and acidic residues. 2 stretches are compositionally biased toward polar residues: residues R309–T326 and V407–I420.

The protein belongs to the TPX2 family. Expressed in seedlings.

It localises to the cytoplasm. Its subcellular location is the cytoskeleton. Functionally, microtubule-associated protein (MAP) that regulates the orientation of interphase cortical microtubules. The protein is Protein WVD2-like 7 of Arabidopsis thaliana (Mouse-ear cress).